The sequence spans 523 residues: Mitochondrial distribution and morphology protein 34 (523 aa).

Residues 1 to 200 (MSFKVNWKSL…LPTLIHQFSL (200 aa)) enclose the SMP-LTD domain. The tract at residues 489 to 523 (ELSMDRSGKRKQRNYGSATYESENPIVAPPPPYSH) is disordered.

It belongs to the MDM34 family. As to quaternary structure, component of the ER-mitochondria encounter structure (ERMES) or MDM complex, composed of MMM1, MDM10, MDM12 and MDM34.

It localises to the mitochondrion outer membrane. Its function is as follows. Component of the ERMES/MDM complex, which serves as a molecular tether to connect the endoplasmic reticulum (ER) and mitochondria. Components of this complex are involved in the control of mitochondrial shape and protein biogenesis, and function in nonvesicular lipid trafficking between the ER and mitochondria. MDM34 is required for the interaction of the ER-resident membrane protein MMM1 and the outer mitochondrial membrane-resident beta-barrel protein MDM10. The protein is Mitochondrial distribution and morphology protein 34 of Scheffersomyces stipitis (strain ATCC 58785 / CBS 6054 / NBRC 10063 / NRRL Y-11545) (Yeast).